An 89-amino-acid polypeptide reads, in one-letter code: Neuropeptide S (89 aa).

Residues 1 to 23 form the signal peptide; sequence MIGSLKFNFILFLLISTMHMFWC. Residues 24–67 constitute a propeptide that is removed on maturation; the sequence is HPISSSKVPGKSDYFVILLNSCPTRMDRRVGLDFLKPILEKTLM.

The protein localises to the secreted. Its function is as follows. Modulates arousal and anxiety. May play an important anorexigenic role. Binds to its receptor NPSR1 with nanomolar affinity to increase intracellular calcium concentrations. The polypeptide is Neuropeptide S (NPS) (Bos taurus (Bovine)).